The primary structure comprises 223 residues: Ubiquitin carboxyl-terminal hydrolase isozyme L1 (223 aa).

Met1 carries the N-acetylmethionine modification. The 220-residue stretch at Gln2–Lys221 folds into the UCH catalytic domain. An interaction with ubiquitin region spans residues Pro5–Pro10. Catalysis depends on Cys90, which acts as the Nucleophile. A Phosphoserine modification is found at Ser125. The active-site Proton donor is His161. The interval Glu211–Ala216 is interaction with ubiquitin. A lipid anchor (S-farnesyl cysteine) is attached at Cys220. Positions Lys221–Ala223 are cleaved as a propeptide — removed in mature form.

It belongs to the peptidase C12 family. Monomer. Homodimer. Interacts with COPS5 and SNCA. O-glycosylated. As to expression, expressed in brain, where it is found in neurons but not in oligodendrocytes or astrocytes. Found in the ganglion cell layer and the inner nuclear layer of the retina (at protein level). Expressed in brain and testis. In the brain, expression is at its lowest in replaceable neurons of hippocampus and olfactory bulb. Highly expressed in senescent pituitary. In skeletal muscle, primarily expressed in oxidative muscle fibers.

Its subcellular location is the cytoplasm. It localises to the endoplasmic reticulum membrane. The enzyme catalyses Thiol-dependent hydrolysis of ester, thioester, amide, peptide and isopeptide bonds formed by the C-terminal Gly of ubiquitin (a 76-residue protein attached to proteins as an intracellular targeting signal).. Deubiquitinase that plays a role in the regulation of several processes such as maintenance of synaptic function, cardiac function, inflammatory response or osteoclastogenesis. Abrogates the ubiquitination of multiple proteins including WWTR1/TAZ, EGFR, HIF1A and beta-site amyloid precursor protein cleaving enzyme 1/BACE1. In addition, recognizes and hydrolyzes a peptide bond at the C-terminal glycine of ubiquitin to maintain a stable pool of monoubiquitin that is a key requirement for the ubiquitin-proteasome and the autophagy-lysosome pathways. Regulates amyloid precursor protein/APP processing by promoting BACE1 degradation resulting in decreased amyloid beta production. Plays a role in the immune response by regulating the ability of MHC I molecules to reach cross-presentation compartments competent for generating Ag-MHC I complexes. Mediates the 'Lys-48'-linked deubiquitination of the transcriptional coactivator WWTR1/TAZ leading to its stabilization and inhibition of osteoclastogenesis. Deubiquitinates and stabilizes epidermal growth factor receptor EGFR to prevent its degradation and to activate its downstream mediators. Modulates oxidative activity in skeletal muscle by regulating key mitochondrial oxidative proteins. Enhances the activity of hypoxia-inducible factor 1-alpha/HIF1A by abrogateing its VHL E3 ligase-mediated ubiquitination and consequently inhibiting its degradation. The sequence is that of Ubiquitin carboxyl-terminal hydrolase isozyme L1 (Uchl1) from Mus musculus (Mouse).